The following is a 270-amino-acid chain: Phosphatidylglycerol--prolipoprotein diacylglyceryl transferase (270 aa).

The next 4 helical transmembrane spans lie at 19-39 (FPVY…LWLA), 56-76 (LVLI…VIFE), 92-112 (QGGL…VLFA), and 116-136 (GVSF…GQAI). R138 provides a ligand contact to a 1,2-diacyl-sn-glycero-3-phospho-(1'-sn-glycerol). Transmembrane regions (helical) follow at residues 178–198 (HPTF…LLAL), 206–226 (GELF…VEGL), and 236–256 (LRIA…FIIV).

This sequence belongs to the Lgt family.

It localises to the cell membrane. The enzyme catalyses L-cysteinyl-[prolipoprotein] + a 1,2-diacyl-sn-glycero-3-phospho-(1'-sn-glycerol) = an S-1,2-diacyl-sn-glyceryl-L-cysteinyl-[prolipoprotein] + sn-glycerol 1-phosphate + H(+). Its pathway is protein modification; lipoprotein biosynthesis (diacylglyceryl transfer). In terms of biological role, catalyzes the transfer of the diacylglyceryl group from phosphatidylglycerol to the sulfhydryl group of the N-terminal cysteine of a prolipoprotein, the first step in the formation of mature lipoproteins. The sequence is that of Phosphatidylglycerol--prolipoprotein diacylglyceryl transferase from Bacillus cereus (strain B4264).